Consider the following 649-residue polypeptide: Choline transporter-like protein 3 (649 aa).

A helical membrane pass occupies residues 33-53 (AWLFLFFLFWTGLVFIMGYSV). Asn-136 and Asn-151 each carry an N-linked (GlcNAc...) asparagine glycan. Transmembrane regions (helical) follow at residues 213 to 233 (DTVLGLCILAFALSLAMMFTF), 235 to 255 (FITTLLVHIFIALIVLGLLFV), 284 to 304 (LLGFAIVSTVITAVLLILIYV), 334 to 354 (LWTFAILIFFWVLWVAVLLSL), and 384 to 404 (LIGLIWTSEFILACQQMAVAG). N-linked (GlcNAc...) asparagine glycans are attached at residues Asn-414, Asn-502, and Asn-520. 2 consecutive transmembrane segments (helical) span residues 533–553 (FIIFLGKVLVVCFTVFGGLMA) and 562–582 (VWAVPLLLVAFFAYLVAHSFL).

It belongs to the CTL (choline transporter-like) family.

The protein resides in the membrane. This Bos taurus (Bovine) protein is Choline transporter-like protein 3 (SLC44A3).